Consider the following 150-residue polypeptide: Large ribosomal subunit protein uL15 (150 aa).

The protein belongs to the universal ribosomal protein uL15 family. In terms of assembly, part of the 50S ribosomal subunit.

Functionally, binds to the 23S rRNA. The sequence is that of Large ribosomal subunit protein uL15 from Rickettsia prowazekii (strain Madrid E).